A 243-amino-acid polypeptide reads, in one-letter code: Purine nucleoside phosphorylase YfiH (243 aa).

Zn(2+) is bound by residues histidine 71, cysteine 107, and histidine 124.

Belongs to the purine nucleoside phosphorylase YfiH/LACC1 family. Homodimer. The cofactor is Cu(2+). Zn(2+) is required as a cofactor.

The enzyme catalyses adenosine + phosphate = alpha-D-ribose 1-phosphate + adenine. It carries out the reaction S-methyl-5'-thioadenosine + phosphate = 5-(methylsulfanyl)-alpha-D-ribose 1-phosphate + adenine. It catalyses the reaction inosine + phosphate = alpha-D-ribose 1-phosphate + hypoxanthine. The catalysed reaction is adenosine + H2O + H(+) = inosine + NH4(+). Functionally, purine nucleoside enzyme that catalyzes the phosphorolysis of adenosine and inosine nucleosides, yielding D-ribose 1-phosphate and the respective free bases, adenine and hypoxanthine. Also catalyzes the phosphorolysis of S-methyl-5'-thioadenosine into adenine and S-methyl-5-thio-alpha-D-ribose 1-phosphate. Also has adenosine deaminase activity. May also act as a polyphenol oxidase: able to oxidize syringaldazine and 2,2'-azino-bis(3-ethylbenzthiazoline-6-sulfonic acid) (ABTS) in vitro. The polypeptide is Purine nucleoside phosphorylase YfiH (Escherichia coli (strain K12)).